Consider the following 347-residue polypeptide: uncharacterized protein (347 aa).

Transmembrane regions (helical) follow at residues 15 to 35, 46 to 66, 84 to 104, 111 to 131, 149 to 169, 182 to 202, 214 to 234, 249 to 269, 283 to 303, and 312 to 332; these read FVPS…DSLL, VAVG…VPWV, VLSA…ADFI, FWGG…SLIV, GWYI…LIMP, INYF…AVVI, AMAP…VALI, FYIF…MAII, AMSW…SHLV, and IDYI…ITLI.

The protein belongs to the tellurite-resistance/dicarboxylate transporter (TDT) family.

It localises to the cell membrane. This is an uncharacterized protein from Methanocaldococcus jannaschii (strain ATCC 43067 / DSM 2661 / JAL-1 / JCM 10045 / NBRC 100440) (Methanococcus jannaschii).